Here is a 159-residue protein sequence, read N- to C-terminus: Aspartate carbamoyltransferase regulatory chain (159 aa).

4 residues coordinate Zn(2+): cysteine 111, cysteine 116, cysteine 141, and cysteine 144.

It belongs to the PyrI family. Contains catalytic and regulatory chains. Zn(2+) is required as a cofactor.

In terms of biological role, involved in allosteric regulation of aspartate carbamoyltransferase. This is Aspartate carbamoyltransferase regulatory chain from Aeropyrum pernix (strain ATCC 700893 / DSM 11879 / JCM 9820 / NBRC 100138 / K1).